The chain runs to 198 residues: Small ribosomal subunit protein uS4 (198 aa).

The S4 RNA-binding domain maps to 91-154 (SRLDNVVYRL…KNLNIVQEAL (64 aa)).

The protein belongs to the universal ribosomal protein uS4 family. Part of the 30S ribosomal subunit. Contacts protein S5. The interaction surface between S4 and S5 is involved in control of translational fidelity.

Its function is as follows. One of the primary rRNA binding proteins, it binds directly to 16S rRNA where it nucleates assembly of the body of the 30S subunit. With S5 and S12 plays an important role in translational accuracy. The sequence is that of Small ribosomal subunit protein uS4 from Aster yellows witches'-broom phytoplasma (strain AYWB).